Reading from the N-terminus, the 132-residue chain is Large ribosomal subunit protein uL14 (132 aa).

Belongs to the universal ribosomal protein uL14 family. In terms of assembly, part of the 50S ribosomal subunit. Forms a cluster with proteins L3 and L24e, part of which may contact the 16S rRNA in 2 intersubunit bridges.

Binds to 23S rRNA. Forms part of two intersubunit bridges in the 70S ribosome. In Methanobrevibacter smithii (strain ATCC 35061 / DSM 861 / OCM 144 / PS), this protein is Large ribosomal subunit protein uL14.